The following is a 225-amino-acid chain: NAD(P)H-quinone oxidoreductase subunit K, chloroplastic (225 aa).

4 residues coordinate [4Fe-4S] cluster: Cys-43, Cys-44, Cys-108, and Cys-139.

The protein belongs to the complex I 20 kDa subunit family. As to quaternary structure, NDH is composed of at least 16 different subunits, 5 of which are encoded in the nucleus. The cofactor is [4Fe-4S] cluster.

The protein localises to the plastid. It localises to the chloroplast thylakoid membrane. It carries out the reaction a plastoquinone + NADH + (n+1) H(+)(in) = a plastoquinol + NAD(+) + n H(+)(out). It catalyses the reaction a plastoquinone + NADPH + (n+1) H(+)(in) = a plastoquinol + NADP(+) + n H(+)(out). Functionally, NDH shuttles electrons from NAD(P)H:plastoquinone, via FMN and iron-sulfur (Fe-S) centers, to quinones in the photosynthetic chain and possibly in a chloroplast respiratory chain. The immediate electron acceptor for the enzyme in this species is believed to be plastoquinone. Couples the redox reaction to proton translocation, and thus conserves the redox energy in a proton gradient. This chain is NAD(P)H-quinone oxidoreductase subunit K, chloroplastic, found in Populus trichocarpa (Western balsam poplar).